A 260-amino-acid chain; its full sequence is Taurine import ATP-binding protein TauB (260 aa).

Residues 6-235 (AQQVSVVYAS…RYAHGEPMRS (230 aa)) enclose the ABC transporter domain. An ATP-binding site is contributed by 40–47 (GASGCGKS).

Belongs to the ABC transporter superfamily. Taurine importer (TC 3.A.1.17.1) family. As to quaternary structure, the complex is composed of two ATP-binding proteins (TauB), two transmembrane proteins (TauC) and a solute-binding protein (TauA).

It is found in the cell inner membrane. It catalyses the reaction taurine(out) + ATP + H2O = taurine(in) + ADP + phosphate + H(+). Functionally, part of the ABC transporter complex TauABC involved in taurine import. Responsible for energy coupling to the transport system. This Burkholderia pseudomallei (strain 1710b) protein is Taurine import ATP-binding protein TauB.